The primary structure comprises 307 residues: Reaction center protein M chain (307 aa).

A2 carries the post-translational modification Blocked amino end (Ala). Transmembrane regions (helical) follow at residues 45 to 69, 103 to 123, and 133 to 153; these read FWNA…FAQV, GWWL…YMHI, and KPYL…IYII. Position 192 (H192) interacts with (7R,8Z)-bacteriochlorophyll b. A helical membrane pass occupies residues 196–216; the sequence is IFFLLGSTLLLAMHAGTIWAL. Residues H209, E236, and H256 each contribute to the Fe cation site. A helical membrane pass occupies residues 257 to 277; the sequence is LWAFWFAWLCGITGALGVFFS.

The protein belongs to the reaction center PufL/M/PsbA/D family. As to quaternary structure, reaction center is composed of four bacteriochlorophylls, two bacteriopheophytins, two ubiquinones, one iron, and two highly hydrophobic polypeptide chains (designated L and M).

Its subcellular location is the cell membrane. Its function is as follows. The reaction center is a membrane-bound complex that mediates the initial photochemical event in the electron transfer process of photosynthesis. This is Reaction center protein M chain (pufM) from Chloroflexus aurantiacus (strain ATCC 29366 / DSM 635 / J-10-fl).